The sequence spans 262 residues: Ribosomal RNA small subunit methyltransferase A (262 aa).

Positions 14, 16, 41, 62, 87, and 109 each coordinate S-adenosyl-L-methionine.

The protein belongs to the class I-like SAM-binding methyltransferase superfamily. rRNA adenine N(6)-methyltransferase family. RsmA subfamily.

It is found in the cytoplasm. The enzyme catalyses adenosine(1518)/adenosine(1519) in 16S rRNA + 4 S-adenosyl-L-methionine = N(6)-dimethyladenosine(1518)/N(6)-dimethyladenosine(1519) in 16S rRNA + 4 S-adenosyl-L-homocysteine + 4 H(+). Specifically dimethylates two adjacent adenosines (A1518 and A1519) in the loop of a conserved hairpin near the 3'-end of 16S rRNA in the 30S particle. May play a critical role in biogenesis of 30S subunits. The polypeptide is Ribosomal RNA small subunit methyltransferase A (Francisella tularensis subsp. tularensis (strain FSC 198)).